The primary structure comprises 412 residues: Multifunctional CCA protein (412 aa).

Residues Gly-8 and Arg-11 each coordinate ATP. CTP-binding residues include Gly-8 and Arg-11. Residues Asp-21 and Asp-23 each contribute to the Mg(2+) site. Residues Arg-91, Arg-137, and Arg-140 each contribute to the ATP site. Positions 91, 137, and 140 each coordinate CTP. An HD domain is found at 228-329 (TGIHTLMTLS…VKLFDSIDAW (102 aa)).

It belongs to the tRNA nucleotidyltransferase/poly(A) polymerase family. Bacterial CCA-adding enzyme type 1 subfamily. In terms of assembly, monomer. Can also form homodimers and oligomers. It depends on Mg(2+) as a cofactor. Ni(2+) serves as cofactor.

The enzyme catalyses a tRNA precursor + 2 CTP + ATP = a tRNA with a 3' CCA end + 3 diphosphate. It catalyses the reaction a tRNA with a 3' CCA end + 2 CTP + ATP = a tRNA with a 3' CCACCA end + 3 diphosphate. Functionally, catalyzes the addition and repair of the essential 3'-terminal CCA sequence in tRNAs without using a nucleic acid template. Adds these three nucleotides in the order of C, C, and A to the tRNA nucleotide-73, using CTP and ATP as substrates and producing inorganic pyrophosphate. tRNA 3'-terminal CCA addition is required both for tRNA processing and repair. Also involved in tRNA surveillance by mediating tandem CCA addition to generate a CCACCA at the 3' terminus of unstable tRNAs. While stable tRNAs receive only 3'-terminal CCA, unstable tRNAs are marked with CCACCA and rapidly degraded. This Escherichia coli O81 (strain ED1a) protein is Multifunctional CCA protein.